The sequence spans 157 residues: S-ribosylhomocysteine lyase (157 aa).

Residues His-54, His-58, and Cys-124 each coordinate Fe cation.

The protein belongs to the LuxS family. As to quaternary structure, homodimer. The cofactor is Fe cation.

It catalyses the reaction S-(5-deoxy-D-ribos-5-yl)-L-homocysteine = (S)-4,5-dihydroxypentane-2,3-dione + L-homocysteine. In terms of biological role, involved in the synthesis of autoinducer 2 (AI-2) which is secreted by bacteria and is used to communicate both the cell density and the metabolic potential of the environment. The regulation of gene expression in response to changes in cell density is called quorum sensing. Catalyzes the transformation of S-ribosylhomocysteine (RHC) to homocysteine (HC) and 4,5-dihydroxy-2,3-pentadione (DPD). The chain is S-ribosylhomocysteine lyase from Lactobacillus helveticus (strain DPC 4571).